A 1055-amino-acid polypeptide reads, in one-letter code: SMC5-SMC6 complex localization factor protein 1 (1055 aa).

2 consecutive BRCT domains span residues 2–80 (EDDA…AQSG) and 121–199 (PGAF…LLEK). Positions 312 to 332 (KKRKKEKERDSRKDIEHDRST) are disordered. Residues 318–332 (KERDSRKDIEHDRST) show a composition bias toward basic and acidic residues. Residues 407–1055 (PRGILNLIES…VMCRSVTEIS (649 aa)) form an NSE5-like domain; mediates interaction with SLF2 region. 3 ANK repeats span residues 804 to 834 (KGET…DINV), 838 to 867 (AGWT…EVDL), and 872 to 901 (DGVT…PVLL). A Glycyl lysine isopeptide (Lys-Gly) (interchain with G-Cter in SUMO2) cross-link involves residue Lys929.

Interacts (via N-terminus) with SLF2; this interaction links RAD18 to the SMC5-SMC6 complex. Interacts (via BRCT domains) with RAD18; this interaction occurs in a SLF2-independent manner. Interacts with SMC6. Interacts (via BRCT domains) with RAD18 (via C-terminus and phosphorylated form); this interaction is required for efficient repair of UV-induced DNA damage.

The protein localises to the nucleus. It is found in the cytoplasm. The protein resides in the cytoskeleton. Its subcellular location is the microtubule organizing center. It localises to the centrosome. Its function is as follows. Plays a role in the DNA damage response (DDR) pathway by regulating postreplication repair of UV-damaged DNA and genomic stability maintenance. The SLF1-SLF2 complex acts to link RAD18 with the SMC5-SMC6 complex at replication-coupled interstrand cross-links (ICL) and DNA double-strand breaks (DSBs) sites on chromatin during DNA repair in response to stalled replication forks. Promotes the recruitment of SLF2 and the SMC5-SMC6 complex to DNA lesions. The polypeptide is SMC5-SMC6 complex localization factor protein 1 (Bos taurus (Bovine)).